A 220-amino-acid polypeptide reads, in one-letter code: NAD(P)H-hydrate epimerase (220 aa).

Positions 6–203 (ARHLTTLATG…SFDLPEALFH (198 aa)) constitute a YjeF N-terminal domain. Residue 53–57 (HNGGV) coordinates (6S)-NADPHX. Asn54 and Asp116 together coordinate K(+). Residues 120–126 (GMRLEGP) and Asp149 each bind (6S)-NADPHX. Thr152 contributes to the K(+) binding site.

It belongs to the NnrE/AIBP family. K(+) serves as cofactor.

The enzyme catalyses (6R)-NADHX = (6S)-NADHX. It carries out the reaction (6R)-NADPHX = (6S)-NADPHX. In terms of biological role, catalyzes the epimerization of the S- and R-forms of NAD(P)HX, a damaged form of NAD(P)H that is a result of enzymatic or heat-dependent hydration. This is a prerequisite for the S-specific NAD(P)H-hydrate dehydratase to allow the repair of both epimers of NAD(P)HX. This chain is NAD(P)H-hydrate epimerase, found in Truepera radiovictrix (strain DSM 17093 / CIP 108686 / LMG 22925 / RQ-24).